Consider the following 186-residue polypeptide: GTP cyclohydrolase 1 1 (186 aa).

Belongs to the GTP cyclohydrolase I family. As to quaternary structure, homomer.

It catalyses the reaction GTP + H2O = 7,8-dihydroneopterin 3'-triphosphate + formate + H(+). It participates in cofactor biosynthesis; 7,8-dihydroneopterin triphosphate biosynthesis; 7,8-dihydroneopterin triphosphate from GTP: step 1/1. This is GTP cyclohydrolase 1 1 (folE1) from Pseudomonas aeruginosa (strain ATCC 15692 / DSM 22644 / CIP 104116 / JCM 14847 / LMG 12228 / 1C / PRS 101 / PAO1).